We begin with the raw amino-acid sequence, 250 residues long: Small ribosomal subunit protein uS2 (250 aa).

It belongs to the universal ribosomal protein uS2 family.

The sequence is that of Small ribosomal subunit protein uS2 from Paraburkholderia phymatum (strain DSM 17167 / CIP 108236 / LMG 21445 / STM815) (Burkholderia phymatum).